We begin with the raw amino-acid sequence, 306 residues long: GTP cyclohydrolase FolE2 (306 aa).

Belongs to the GTP cyclohydrolase IV family.

The catalysed reaction is GTP + H2O = 7,8-dihydroneopterin 3'-triphosphate + formate + H(+). The protein operates within cofactor biosynthesis; 7,8-dihydroneopterin triphosphate biosynthesis; 7,8-dihydroneopterin triphosphate from GTP: step 1/1. Its function is as follows. Converts GTP to 7,8-dihydroneopterin triphosphate. The chain is GTP cyclohydrolase FolE2 from Pseudoalteromonas atlantica (strain T6c / ATCC BAA-1087).